A 367-amino-acid chain; its full sequence is CCN family member 4 (367 aa).

The N-terminal stretch at 1–22 (MRWFLPWTLAAVTAAAASTVLA) is a signal peptide. An IGFBP N-terminal domain is found at 45-118 (RPQFCKWPCE…RYAIGVCAQV (74 aa)). Intrachain disulfides connect Cys-49–Cys-73, Cys-53–Cys-75, Cys-55–Cys-76, and Cys-62–Cys-79. N-linked (GlcNAc...) asparagine glycosylation is present at Asn-86. Disulfide bonds link Cys-87-Cys-101 and Cys-93-Cys-115. Residues 121–186 (VGCVLDGVRY…GHCCEQWVCE (66 aa)) form the VWFC domain. N-linked (GlcNAc...) asparagine glycosylation occurs at Asn-143. Residues 215–260 (NCIAYTSPWSPCSTSCGLGVSTRISNVNAQCWPEQESRLCNLRPCD) form the TSP type-1 domain. 5 disulfides stabilise this stretch: Cys-273/Cys-310, Cys-290/Cys-324, Cys-301/Cys-340, Cys-304/Cys-342, and Cys-309/Cys-346. A CTCK domain is found at 273-347 (CLAVYQPEAS…NACFCNLSCR (75 aa)). A glycan (N-linked (GlcNAc...) asparagine) is linked at Asn-284. N-linked (GlcNAc...) asparagine glycosylation is present at Asn-343.

The protein belongs to the CCN family. As to expression, expressed in heart, kidney, lung, pancreas, placenta, ovary, small intestine and spleen. Isoform 2 is expressed predominantly in scirrhous gastric carcinoma and, weakly in placenta. Overexpression is associated with several cancers including breast cancer and colon tumors. Isoform 2 is overexpressed in scirrhous gastric carcinoma.

The protein resides in the secreted. Functionally, downstream regulator in the Wnt/Frizzled-signaling pathway. Associated with cell survival. Attenuates p53-mediated apoptosis in response to DNA damage through activation of AKT kinase. Up-regulates the anti-apoptotic Bcl-X(L) protein. Adheres to skin and melanoma fibroblasts. In vitro binding to skin fibroblasts occurs through the proteoglycans, decorin and biglycan. In Homo sapiens (Human), this protein is CCN family member 4.